We begin with the raw amino-acid sequence, 278 residues long: Large ribosomal subunit protein uL2 (278 aa).

Residues 222-278 (GVVMNPVDHPHGGGEGRTSGGRHPVTPWGKPTKGAKTRKNKSTDKFIIRSRHERKKR) form a disordered region. Residues 269-278 (IRSRHERKKR) show a composition bias toward basic residues.

The protein belongs to the universal ribosomal protein uL2 family. Part of the 50S ribosomal subunit. Forms a bridge to the 30S subunit in the 70S ribosome.

Its function is as follows. One of the primary rRNA binding proteins. Required for association of the 30S and 50S subunits to form the 70S ribosome, for tRNA binding and peptide bond formation. It has been suggested to have peptidyltransferase activity; this is somewhat controversial. Makes several contacts with the 16S rRNA in the 70S ribosome. The sequence is that of Large ribosomal subunit protein uL2 from Maricaulis maris (strain MCS10) (Caulobacter maris).